A 666-amino-acid chain; its full sequence is Probable potassium transport system protein Kup (666 aa).

12 helical membrane passes run 16-36 (GFII…LYTM), 58-78 (ISLI…LIAL), 100-120 (PWLI…GALT), 141-161 (IYQN…VLFG), 165-185 (FGTG…FSFL), 221-241 (IFIL…YSDL), 253-273 (WPFV…WILA), 294-314 (VYLV…LISG), 343-363 (LYIP…VLAF), 373-393 (YGLA…YYLI), 399-419 (PILA…FFLA), and 424-444 (FMHG…VMFI).

Belongs to the HAK/KUP transporter (TC 2.A.72) family.

The protein localises to the cell membrane. The catalysed reaction is K(+)(in) + H(+)(in) = K(+)(out) + H(+)(out). Its function is as follows. Transport of potassium into the cell. Likely operates as a K(+):H(+) symporter. The chain is Probable potassium transport system protein Kup from Streptococcus pyogenes serotype M49 (strain NZ131).